We begin with the raw amino-acid sequence, 313 residues long: Ribosomal RNA small subunit methyltransferase H (313 aa).

S-adenosyl-L-methionine contacts are provided by residues 35 to 37 (GGH), D55, F79, D101, and Q108.

This sequence belongs to the methyltransferase superfamily. RsmH family.

The protein localises to the cytoplasm. It catalyses the reaction cytidine(1402) in 16S rRNA + S-adenosyl-L-methionine = N(4)-methylcytidine(1402) in 16S rRNA + S-adenosyl-L-homocysteine + H(+). In terms of biological role, specifically methylates the N4 position of cytidine in position 1402 (C1402) of 16S rRNA. The polypeptide is Ribosomal RNA small subunit methyltransferase H (Escherichia coli O81 (strain ED1a)).